The primary structure comprises 85 residues: MGNLTSTCLFSSRENTAAKINDSSTWYPQQGQHISIQTFRELNRLPTSRRTSTKTEILLYGENSRSTVEVLEEVAKHLTTLQQRR.

Gly2 is lipidated: N-myristoyl glycine; by host.

It belongs to the geminiviridae protein AC4/C4 family. As to quaternary structure, interacts with Arabidopsis thaliana ASK7/ASK-eta and ASK6/ASK-zeta proteins. Phosphorylated by Arabidopsis thaliana ASK7/ASK-eta mainly on threonine and serine residues.

It is found in the host cell membrane. In terms of biological role, pathogenicity determinant. May act as a suppressor of RNA-mediated gene silencing, also known as post-transcriptional gene silencing (PTGS), a mechanism of plant viral defense that limits the accumulation of viral RNAs. May repress the AL61 promoter. This Solanum lycopersicum (Tomato) protein is Protein AC4.